Reading from the N-terminus, the 309-residue chain is ATP synthase gamma chain (309 aa).

It belongs to the ATPase gamma chain family. In terms of assembly, F-type ATPases have 2 components, CF(1) - the catalytic core - and CF(0) - the membrane proton channel. CF(1) has five subunits: alpha(3), beta(3), gamma(1), delta(1), epsilon(1). CF(0) has three main subunits: a, b and c.

The protein resides in the cell membrane. Its function is as follows. Produces ATP from ADP in the presence of a proton gradient across the membrane. The gamma chain is believed to be important in regulating ATPase activity and the flow of protons through the CF(0) complex. This chain is ATP synthase gamma chain, found in Ligilactobacillus salivarius (strain UCC118) (Lactobacillus salivarius).